Reading from the N-terminus, the 129-residue chain is Vacuolar transporter chaperone complex subunit 1 (129 aa).

Position 2 is an N-acetylserine (Ser2). The Cytoplasmic segment spans residues 2 to 32 (SSAPLLQRTPGKKIALPTRVEPKVFFANERT). Residues 33–53 (FLSWLNFTVMLGGLGVGLLNF) traverse the membrane as a helical segment. The Vacuolar portion of the chain corresponds to 54-59 (GDKIGR). A helical transmembrane segment spans residues 60-80 (VSAGLFTFVAMGTMIYALVTY). The Cytoplasmic portion of the chain corresponds to 81–98 (HWRAAAIRRRGSGPYDDR). A helical transmembrane segment spans residues 99–119 (LGPTLLCFFLLVAVIINFILR). At 120–129 (LKYNDANTKL) the chain is on the vacuolar side.

The protein belongs to the VTC1 family. The VTC core complex is an integral membrane heterooligomer composed of the catalytic subunit VTC4 and the accessory subunits VTC1, VTC2 and VTC3. The complex exists in 2 different sub-complexes: VTC1-VTC2-VCT4 and VCT1-VTC3-VTC4. The VCT1-VTC3-VTC4 subcomplex is mostly found on the vacuolar membrane. The VTC1-VTC2-VCT4 subcomplex is observed in the cell periphery, probably ER and nuclear envelope, but localizes to the vacuole under phosphate starvation. Each subunit contains 3 transmembrane helices. VTC1 is a small membrane protein without hydrophilic domain. VTC2, VTC3 and VTC4 are related and have 2 hydrophilic domains that face the cytosol, an N-terminal SPX domain and the central core domain. The central core in VTC4 is the catalytic domain, with the essential catalytic lysine replaced by isoleucine and leucine in VTC2 and VTC3, respectively. The core complex associates with the accessory subunit VTC5. The complex interacts with the v-SNARE NYV1 and with the V(0) subunit of V-ATPase VPH1.

It localises to the vacuole membrane. The protein resides in the cytoplasm. It is found in the cell cortex. The protein localises to the endoplasmic reticulum membrane. Its subcellular location is the cytoplasmic vesicle. It localises to the autophagosome membrane. Functionally, accessory subunit of the vacuolar transporter chaperone (VTC) complex. The VTC complex acts as a vacuolar polyphosphate polymerase that catalyzes the synthesis of inorganic polyphosphate (polyP) via transfer of phosphate from ATP to a growing polyP chain, releasing ADP. VTC exposes its catalytic domain VTC4 to the cytosol, where the growing polyP chain winds through a tunnel-shaped pocket, integrating cytoplasmic polymer synthesis with polyP membrane translocation. The VTC complex carries 9 vacuolar transmembrane domains, which are likely to constitute the translocation channel into the organelle lumen. PolyP synthesis is tightly coupled to its transport into the vacuole lumen, in order to avoid otherwise toxic intermediates in the cytosol, and it depends on the proton gradient across the membrane, formed by V-ATPase. VTC1 contributes only 3 transmembrane domains to the complex. The VTC complex also plays a role in vacuolar membrane fusion. Required for SEC18/NSF activity in SNARE priming, membrane binding of LMA1 and V(0) trans-complex formation. The protein is Vacuolar transporter chaperone complex subunit 1 of Saccharomyces cerevisiae (strain ATCC 204508 / S288c) (Baker's yeast).